The following is a 452-amino-acid chain: Putative purine permease CPE0397 (452 aa).

12 helical membrane passes run I34–F54, V58–A78, K83–I103, V108–L128, F138–V158, Y172–N192, S201–V221, M250–I270, A326–I346, G348–A368, L383–I403, and M412–L432.

This sequence belongs to the nucleobase:cation symporter-2 (NCS2) (TC 2.A.40) family.

Its subcellular location is the cell membrane. This is Putative purine permease CPE0397 (cpx) from Clostridium perfringens (strain 13 / Type A).